A 228-amino-acid polypeptide reads, in one-letter code: uncharacterized protein (228 aa).

This is an uncharacterized protein from Rickettsia prowazekii (strain Madrid E).